A 370-amino-acid polypeptide reads, in one-letter code: Queuine tRNA-ribosyltransferase (370 aa).

The Proton acceptor role is filled by D89. Substrate-binding positions include 89 to 93 (DSGGF), D143, Q187, and G214. The interval 245–251 (GVGKPED) is RNA binding. D264 (nucleophile) is an active-site residue. Positions 269–273 (TRNAR) are RNA binding; important for wobble base 34 recognition. Positions 302, 304, 307, and 333 each coordinate Zn(2+).

It belongs to the queuine tRNA-ribosyltransferase family. In terms of assembly, homodimer. Within each dimer, one monomer is responsible for RNA recognition and catalysis, while the other monomer binds to the replacement base PreQ1. It depends on Zn(2+) as a cofactor.

The catalysed reaction is 7-aminomethyl-7-carbaguanine + guanosine(34) in tRNA = 7-aminomethyl-7-carbaguanosine(34) in tRNA + guanine. It participates in tRNA modification; tRNA-queuosine biosynthesis. Functionally, catalyzes the base-exchange of a guanine (G) residue with the queuine precursor 7-aminomethyl-7-deazaguanine (PreQ1) at position 34 (anticodon wobble position) in tRNAs with GU(N) anticodons (tRNA-Asp, -Asn, -His and -Tyr). Catalysis occurs through a double-displacement mechanism. The nucleophile active site attacks the C1' of nucleotide 34 to detach the guanine base from the RNA, forming a covalent enzyme-RNA intermediate. The proton acceptor active site deprotonates the incoming PreQ1, allowing a nucleophilic attack on the C1' of the ribose to form the product. After dissociation, two additional enzymatic reactions on the tRNA convert PreQ1 to queuine (Q), resulting in the hypermodified nucleoside queuosine (7-(((4,5-cis-dihydroxy-2-cyclopenten-1-yl)amino)methyl)-7-deazaguanosine). The chain is Queuine tRNA-ribosyltransferase from Baumannia cicadellinicola subsp. Homalodisca coagulata.